Consider the following 184-residue polypeptide: MDSLKNHLLIAMPSLDGSFFERTVIYVCEHDEKGAMGIVINRPIGLSVEALLIQMDLDAEANLSDDAQVLIGGPVLPDRGFVLHSPEKVWTNSEAVSDYCTLTTSRDILNAIGSADAPSQFKVALGYSGWSKDQLEQELADNTWLTIKASSELVFDVDYEQLWTLATKELGFDIWQLSSQTGHC.

Belongs to the UPF0301 (AlgH) family.

The protein is UPF0301 protein Sden_2674 of Shewanella denitrificans (strain OS217 / ATCC BAA-1090 / DSM 15013).